We begin with the raw amino-acid sequence, 67 residues long: Large ribosomal subunit protein bL35 (67 aa).

Belongs to the bacterial ribosomal protein bL35 family.

The chain is Large ribosomal subunit protein bL35 from Mesorhizobium japonicum (strain LMG 29417 / CECT 9101 / MAFF 303099) (Mesorhizobium loti (strain MAFF 303099)).